The chain runs to 95 residues: Osteocalcin-related protein (95 aa).

The first 23 residues, M1–A23, serve as a signal peptide directing secretion. Residues T24–R49 constitute a propeptide that is removed on maturation. The region spanning R46–G92 is the Gla domain. Residues E62, E66, E69, and D75 each coordinate Ca(2+). A 4-carboxyglutamate mark is found at E66 and E69. C68 and C74 are oxidised to a cystine.

It belongs to the osteocalcin/matrix Gla protein family. Post-translationally, gamma-carboxyglutamic acid residues are formed by vitamin K dependent carboxylation. These residues are essential for the binding of calcium. Expressed in kidney and lung, but not in bone.

It is found in the secreted. In terms of biological role, binds strongly to apatite and calcium. In Mus musculus (Mouse), this protein is Osteocalcin-related protein.